Here is a 452-residue protein sequence, read N- to C-terminus: Isocitrate dehydrogenase [NADP], mitochondrial (452 aa).

The transit peptide at 1–39 directs the protein to the mitochondrion; the sequence is MAGYLRVVRSLCRASGSGSAWAPAALTAPNLQEQPRRHY. Residues lysine 45, lysine 48, lysine 67, and lysine 69 each carry the N6-acetyllysine modification. An N6-acetyllysine; alternate mark is found at lysine 80 and lysine 106. 2 positions are modified to N6-succinyllysine; alternate: lysine 80 and lysine 106. NADP(+) contacts are provided by residues 115-117 and arginine 122; that span reads TIT. Threonine 117 contacts D-threo-isocitrate. Residues 134–140 and arginine 149 contribute to the D-threo-isocitrate site; that span reads SPNGTIR. Residue lysine 155 is modified to N6-acetyllysine. Lysine 166 carries the post-translational modification N6-acetyllysine; alternate. Residue lysine 166 is modified to N6-succinyllysine; alternate. Position 172 (arginine 172) interacts with D-threo-isocitrate. Residues lysine 180 and lysine 193 each carry the N6-acetyllysine; alternate modification. 2 positions are modified to N6-succinyllysine; alternate: lysine 180 and lysine 193. Lysine 199 is subject to N6-acetyllysine. Lysine 256 is modified (N6-acetyllysine; alternate). Lysine 256 is modified (N6-succinyllysine; alternate). N6-acetyllysine is present on residues lysine 263, lysine 272, lysine 275, and lysine 280. Lysine 282 is modified (N6-acetyllysine; alternate). Lysine 282 is subject to N6-succinyllysine; alternate. Aspartate 291 contributes to the Mn(2+) binding site. Lysine 299 contacts NADP(+). Residue aspartate 314 participates in Mn(2+) binding. NADP(+) contacts are provided by residues 349 to 354 and asparagine 367; that span reads GTVTRH. At lysine 384 the chain carries N6-acetyllysine; alternate. Residue lysine 384 is modified to N6-succinyllysine; alternate. 3 positions are modified to N6-acetyllysine: lysine 400, lysine 413, and lysine 442.

Belongs to the isocitrate and isopropylmalate dehydrogenases family. In terms of assembly, homodimer. Mg(2+) is required as a cofactor. The cofactor is Mn(2+). Post-translationally, acetylation at Lys-413 dramatically reduces catalytic activity. Deacetylated by SIRT3.

It localises to the mitochondrion. The enzyme catalyses D-threo-isocitrate + NADP(+) = 2-oxoglutarate + CO2 + NADPH. Plays a role in intermediary metabolism and energy production. It may tightly associate or interact with the pyruvate dehydrogenase complex. The chain is Isocitrate dehydrogenase [NADP], mitochondrial (IDH2) from Bos taurus (Bovine).